We begin with the raw amino-acid sequence, 379 residues long: ATP phosphoribosyltransferase regulatory subunit (379 aa).

It belongs to the class-II aminoacyl-tRNA synthetase family. HisZ subfamily. As to quaternary structure, heteromultimer composed of HisG and HisZ subunits.

It is found in the cytoplasm. It functions in the pathway amino-acid biosynthesis; L-histidine biosynthesis; L-histidine from 5-phospho-alpha-D-ribose 1-diphosphate: step 1/9. Its function is as follows. Required for the first step of histidine biosynthesis. May allow the feedback regulation of ATP phosphoribosyltransferase activity by histidine. The sequence is that of ATP phosphoribosyltransferase regulatory subunit from Gluconobacter oxydans (strain 621H) (Gluconobacter suboxydans).